Consider the following 141-residue polypeptide: MLMPKRTKYRKQMKGRNRGKAHRGNSIAFGDIAIKAIEHGRIDSRQIESARVAMTRHIKRAGKVWIRVFPDKPLTAKPLETRMGKGKGSVEKWVMNIKPGRIVYEMLGIEEGLAREALALAQSKLPFKTKIVTCESENEIY.

Residues 1 to 23 are disordered; the sequence is MLMPKRTKYRKQMKGRNRGKAHR.

The protein belongs to the universal ribosomal protein uL16 family. Part of the 50S ribosomal subunit.

In terms of biological role, binds 23S rRNA and is also seen to make contacts with the A and possibly P site tRNAs. The sequence is that of Large ribosomal subunit protein uL16 from Helicobacter pylori (strain P12).